A 475-amino-acid chain; its full sequence is Mitochondrial adenyl nucleotide antiporter SLC25A24 (475 aa).

The tract at residues 1–173 is regulatory N-terminal domain; that stretch reads MLRWLRAFVL…RFWKHSTGID (173 aa). The Mitochondrial intermembrane segment spans residues 1–197; that stretch reads MLRWLRAFVL…EKKSGQWWRQ (197 aa). EF-hand domains follow at residues 19–54, 55–88, 86–121, and 122–157; these read EPPT…LGIP, LGQD…KDHE, DHEK…LGLH, and ISEK…NPVT. 20 residues coordinate Ca(2+): Asp32, Asn34, Asp36, Val38, Glu43, Asp68, Asn70, Asp72, Lys74, Glu79, Asp99, Asn101, Asp103, Lys105, Glu110, Asp135, Asp137, Thr139, Thr141, and Glu146. Residues 159-168 are linker region; the sequence is IEEIIRFWKH. The interval 174–475 is C-terminal transmembrane transporter domain; it reads IGDSLTIPDE…MKQTLGVAQK (302 aa). Solcar repeat units lie at residues 192–276, 284–369, and 381–469; these read GQWW…YKKL, LGTF…LKSY, and PGVM…MKQT. The chain crosses the membrane as a helical span at residues 198-215; it reads LLAGGVAGAVSRTSTAPL. At 216–250 the chain is on the mitochondrial matrix side; the sequence is DRLKVMMQVHGSKSMNIFGGFRQMVKEGGIRSLWR. The chain crosses the membrane as a helical span at residues 251-270; it reads GNGTNVIKIAPETAVKFWAY. Residues 271–293 lie on the Mitochondrial intermembrane side of the membrane; the sequence is EQYKKLLTEEGQKLGTFERFISG. Residues 294-307 form a helical membrane-spanning segment; it reads SMAGATAQTFIYPM. Residues 308-343 lie on the Mitochondrial matrix side of the membrane; that stretch reads EVLKTRLAVAKTGQYSGIYGCAKKILKHEGFGAFYK. Lys318 bears the N6-acetyllysine; alternate mark. Lys318 carries the N6-succinyllysine; alternate modification. N6-acetyllysine is present on Lys334. The chain crosses the membrane as a helical span at residues 344-363; the sequence is GYIPNLLGIIPYAGIDLAVY. Residues 364-386 are Mitochondrial intermembrane-facing; the sequence is ELLKSYWLDNFAKDSVNPGVMVL. The chain crosses the membrane as a helical span at residues 387 to 404; the sequence is LSCGALSSTCGQLASYPL. The Mitochondrial matrix segment spans residues 405 to 443; that stretch reads ALVRTRMQAQATVEGAPQLSMVGLFQRIVSKEGVSGLYR. At Lys435 the chain carries N6-acetyllysine; alternate. Lys435 bears the N6-succinyllysine; alternate mark. A helical membrane pass occupies residues 444–463; that stretch reads GITPNFMKVLPAVGISYVVY. At 464–475 the chain is on the mitochondrial intermembrane side; sequence ENMKQTLGVAQK.

Belongs to the mitochondrial carrier (TC 2.A.29) family. As to quaternary structure, monomer.

It is found in the mitochondrion inner membrane. The enzyme catalyses Mg(2+)(out) + phosphate(in) + ATP(out) = Mg(2+)(in) + phosphate(out) + ATP(in). It catalyses the reaction ADP(out) + phosphate(in) + H(+)(out) = ADP(in) + phosphate(out) + H(+)(in). The catalysed reaction is AMP(out) + phosphate(in) = AMP(in) + phosphate(out). It carries out the reaction phosphate(in) + ATP(out) + 2 H(+)(out) = phosphate(out) + ATP(in) + 2 H(+)(in). The enzyme catalyses dADP(in) + ADP(out) = dADP(out) + ADP(in). It catalyses the reaction Mg(2+)(in) + ADP(out) + ATP(in) + H(+)(out) = Mg(2+)(out) + ADP(in) + ATP(out) + H(+)(in). The catalysed reaction is ADP(out) + diphosphate(in) = ADP(in) + diphosphate(out). It carries out the reaction dAMP(in) + ADP(out) + H(+)(out) = dAMP(out) + ADP(in) + H(+)(in). The enzyme catalyses 3'-AMP(in) + ADP(out) + H(+)(out) = 3'-AMP(out) + ADP(in) + H(+)(in). It catalyses the reaction dAMP(out) + phosphate(in) = dAMP(in) + phosphate(out). The catalysed reaction is 3'-AMP(out) + phosphate(in) = 3'-AMP(in) + phosphate(out). It carries out the reaction dADP(out) + phosphate(in) + H(+)(out) = dADP(in) + phosphate(out) + H(+)(in). Activated by an increase in cytosolic calcium levels that induce a conformational change of the N-terminal regulatory domain, uncapping the channel and allowing transport. Inhibited by bathophenanthroline, mersalyl, p-hydroxymercuribenzoate, bromcresol purple and tannic acid. Functionally, electroneutral antiporter that mediates the transport of adenyl nucleotides through the inner mitochondrial membrane. Originally identified as an ATP-magnesium/inorganic phosphate antiporter, it also acts as a broad specificity adenyl nucleotide antiporter. By regulating the mitochondrial matrix adenyl nucleotide pool could adapt to changing cellular energetic demands and indirectly regulate adenyl nucleotide-dependent metabolic pathways. In vitro, a low activity is also observed with guanyl and pyrimidine nucleotides. May play a role in protecting cells against oxidative stress-induced cell death, by buffering calcium levels in the mitochondrial matrix through the formation of calcium-phosphate precipitates. This is Mitochondrial adenyl nucleotide antiporter SLC25A24 from Mus musculus (Mouse).